Reading from the N-terminus, the 401-residue chain is Nicotinate phosphoribosyltransferase (401 aa).

His221 is subject to Phosphohistidine; by autocatalysis.

It belongs to the NAPRTase family. Post-translationally, transiently phosphorylated on a His residue during the reaction cycle. Phosphorylation strongly increases the affinity for substrates and increases the rate of nicotinate D-ribonucleotide production. Dephosphorylation regenerates the low-affinity form of the enzyme, leading to product release.

It carries out the reaction nicotinate + 5-phospho-alpha-D-ribose 1-diphosphate + ATP + H2O = nicotinate beta-D-ribonucleotide + ADP + phosphate + diphosphate. The protein operates within cofactor biosynthesis; NAD(+) biosynthesis; nicotinate D-ribonucleotide from nicotinate: step 1/1. In terms of biological role, catalyzes the synthesis of beta-nicotinate D-ribonucleotide from nicotinate and 5-phospho-D-ribose 1-phosphate at the expense of ATP. The protein is Nicotinate phosphoribosyltransferase of Yersinia pseudotuberculosis serotype O:1b (strain IP 31758).